The following is a 263-amino-acid chain: uncharacterized protein (263 aa).

The interval 22-44 is disordered; sequence IDGSDDQSDRTRSSSGDSTSNSL. Residues 34 to 43 are compositionally biased toward low complexity; it reads SSSGDSTSNS.

The protein localises to the mitochondrion. This is an uncharacterized protein from Schizosaccharomyces pombe (strain 972 / ATCC 24843) (Fission yeast).